The chain runs to 331 residues: Tryptophan--tRNA ligase (331 aa).

Residues 10–12 (QPS) and 18–19 (GN) contribute to the ATP site. The short motif at 11-19 (PSGQLTLGN) is the 'HIGH' region element. D133 lines the L-tryptophan pocket. Residues 145–147 (GED), V184, and 193–197 (KMSKS) contribute to the ATP site. The 'KMSKS' region motif lies at 193 to 197 (KMSKS).

Belongs to the class-I aminoacyl-tRNA synthetase family. Homodimer.

The protein localises to the cytoplasm. The enzyme catalyses tRNA(Trp) + L-tryptophan + ATP = L-tryptophyl-tRNA(Trp) + AMP + diphosphate + H(+). In terms of biological role, catalyzes the attachment of tryptophan to tRNA(Trp). In Listeria monocytogenes serovar 1/2a (strain ATCC BAA-679 / EGD-e), this protein is Tryptophan--tRNA ligase.